Reading from the N-terminus, the 472-residue chain is Uronate isomerase (472 aa).

The protein belongs to the metallo-dependent hydrolases superfamily. Uronate isomerase family.

The enzyme catalyses D-glucuronate = D-fructuronate. It catalyses the reaction aldehydo-D-galacturonate = keto-D-tagaturonate. It functions in the pathway carbohydrate metabolism; pentose and glucuronate interconversion. The polypeptide is Uronate isomerase (Halalkalibacterium halodurans (strain ATCC BAA-125 / DSM 18197 / FERM 7344 / JCM 9153 / C-125) (Bacillus halodurans)).